The chain runs to 444 residues: MARTRNRLDRTPFQTAVTDLSHDGRGVARRDGEGGKVTFISGALPGELVRAEPTARSRHFDEAKTVEVLEASPQRVTPRCPHFGVCAGCVLQHLEESQQIVAKQRVLMDNLERIGHVTPQAVLPALTGDNWGYRRKGRFSVRRVEKKDKTLVGFRELDPRFVADLSICYTVIPQIGEKIPLFAALIEGMDGKRDIPQIEFIAGDDAVALTIRHMQPLSERDRQAWVAFAQEHGFAIFLQPGGVDSVHPLWPQDVPLSFRLPQWEVELAFRPLDFIQVNASLNQKMIAHAVALLEAKPDDRVLDLFCGLGNFTLPLARVVREVVGVEGDAGLVARAKENAQRNGLDNAQFHAADLTQDQRSAPWMRQGFDKLLLDPPRSGALEVLQQLPLKTFDRIVYVSCHPGSLARDAGYLVNDQGFTLVCAGAMDMFPHTAHVESIAVFERR.

Positions 5–67 (RNRLDRTPFQ…RHFDEAKTVE (63 aa)) constitute a TRAM domain. 4 residues coordinate [4Fe-4S] cluster: C80, C86, C89, and C168. Positions 276, 305, 310, 326, 353, and 374 each coordinate S-adenosyl-L-methionine. The Nucleophile role is filled by C400.

This sequence belongs to the class I-like SAM-binding methyltransferase superfamily. RNA M5U methyltransferase family. RlmD subfamily.

It carries out the reaction uridine(1939) in 23S rRNA + S-adenosyl-L-methionine = 5-methyluridine(1939) in 23S rRNA + S-adenosyl-L-homocysteine + H(+). Catalyzes the formation of 5-methyl-uridine at position 1939 (m5U1939) in 23S rRNA. The chain is 23S rRNA (uracil(1939)-C(5))-methyltransferase RlmD from Xanthomonas euvesicatoria pv. vesicatoria (strain 85-10) (Xanthomonas campestris pv. vesicatoria).